The primary structure comprises 757 residues: RNA-directed RNA polymerase catalytic subunit (757 aa).

2 consecutive short sequence motifs (nuclear localization signal) follow at residues 187-195 (RKRRVRDNM) and 203-216 (RTIG…NKRS). Residues 249 to 256 (RGFVYFVE) are promoter-binding site. A RdRp catalytic domain is found at 286-483 (VRKMMTNSQD…GINMSKKKSY (198 aa)).

This sequence belongs to the influenza viruses polymerase PB1 family. In terms of assembly, influenza RNA polymerase is composed of three subunits: PB1, PB2 and PA. Interacts (via N-terminus) with PA (via C-terminus). Interacts (via C-terminus) with PB2 (via N-terminus); this interaction is essential for transcription initiation. Post-translationally, phosphorylated by host PRKCA.

Its subcellular location is the host nucleus. It localises to the host cytoplasm. It catalyses the reaction RNA(n) + a ribonucleoside 5'-triphosphate = RNA(n+1) + diphosphate. RNA-dependent RNA polymerase which is responsible for replication and transcription of virus RNA segments. The transcription of viral mRNAs occurs by a unique mechanism called cap-snatching. 5' methylated caps of cellular mRNAs are cleaved after 10-13 nucleotides by PA. In turn, these short capped RNAs are used as primers by PB1 for transcription of viral mRNAs. During virus replication, PB1 initiates RNA synthesis and copy vRNA into complementary RNA (cRNA) which in turn serves as a template for the production of more vRNAs. The sequence is that of RNA-directed RNA polymerase catalytic subunit from Aves.